The following is a 333-amino-acid chain: MGVALRDILADYKTPVTWEGLSGVAAVDANNTLYQFLTIIRQPDGTPLMDAKGRVTSHLSGILFRMVNFLEKGIKPVFVFDGKPPELKQETNAERKKLRDEAGEKYKEAVERGDEEEAYRQARSATRVDETIIATSKELLDLLGIPYVQAPSEGEAQAAFMVQRGDARFAVSQDYDTLLFGAPLLMRNLTVSGKRKIRGRAVTVNPERLVLSEVLSGLSLTREQLVEVGILVGTDFNPGAAGVGAKTALKIVKSGGFAQKLAEKCPGFDPAPVADFFLKPPVTTEYELAWGHPCVEGIKKMLCDGYDFAPERVDAALERYSAKAGQKTLESFF.

The tract at residues 1–99 (MGVALRDILA…ETNAERKKLR (99 aa)) is N-domain. Asp-28, Asp-81, Glu-153, Glu-155, Asp-174, Asp-176, and Asp-235 together coordinate Mg(2+). Residues 117 to 256 (EAYRQARSAT…TALKIVKSGG (140 aa)) are I-domain. An interaction with PCNA region spans residues 325-333 (GQKTLESFF).

It belongs to the XPG/RAD2 endonuclease family. FEN1 subfamily. In terms of assembly, interacts with PCNA. PCNA stimulates the nuclease activity without altering cleavage specificity. Requires Mg(2+) as cofactor.

In terms of biological role, structure-specific nuclease with 5'-flap endonuclease and 5'-3' exonuclease activities involved in DNA replication and repair. During DNA replication, cleaves the 5'-overhanging flap structure that is generated by displacement synthesis when DNA polymerase encounters the 5'-end of a downstream Okazaki fragment. Binds the unpaired 3'-DNA end and kinks the DNA to facilitate 5' cleavage specificity. Cleaves one nucleotide into the double-stranded DNA from the junction in flap DNA, leaving a nick for ligation. Also involved in the base excision repair (BER) pathway. Acts as a genome stabilization factor that prevents flaps from equilibrating into structures that lead to duplications and deletions. Also possesses 5'-3' exonuclease activity on nicked or gapped double-stranded DNA. The protein is Flap endonuclease 1 of Methanoregula boonei (strain DSM 21154 / JCM 14090 / 6A8).